The sequence spans 153 residues: Large ribosomal subunit protein uL13 (153 aa).

The protein belongs to the universal ribosomal protein uL13 family. As to quaternary structure, part of the 50S ribosomal subunit.

Its function is as follows. This protein is one of the early assembly proteins of the 50S ribosomal subunit, although it is not seen to bind rRNA by itself. It is important during the early stages of 50S assembly. The protein is Large ribosomal subunit protein uL13 of Azorhizobium caulinodans (strain ATCC 43989 / DSM 5975 / JCM 20966 / LMG 6465 / NBRC 14845 / NCIMB 13405 / ORS 571).